A 129-amino-acid chain; its full sequence is Phosphoribosyl-AMP cyclohydrolase (129 aa).

D85 is a Mg(2+) binding site. Position 86 (C86) interacts with Zn(2+). D87 and D89 together coordinate Mg(2+). Zn(2+) contacts are provided by C102 and C109.

This sequence belongs to the PRA-CH family. Homodimer. It depends on Mg(2+) as a cofactor. Zn(2+) serves as cofactor.

It localises to the cytoplasm. It carries out the reaction 1-(5-phospho-beta-D-ribosyl)-5'-AMP + H2O = 1-(5-phospho-beta-D-ribosyl)-5-[(5-phospho-beta-D-ribosylamino)methylideneamino]imidazole-4-carboxamide. Its pathway is amino-acid biosynthesis; L-histidine biosynthesis; L-histidine from 5-phospho-alpha-D-ribose 1-diphosphate: step 3/9. Catalyzes the hydrolysis of the adenine ring of phosphoribosyl-AMP. In Methanococcus maripaludis (strain C5 / ATCC BAA-1333), this protein is Phosphoribosyl-AMP cyclohydrolase.